The sequence spans 712 residues: MLVCLHLQVFLASVALFEVAASDTIAQAASTTTISDAVSKVKTQVNKAFLDSRTRLKTALSSEAPTTRQLSEYFKHAKGRTRTAIRNGQVWEESLKRLRRDTTLTNVTDPSLDLTALSWEVGCGAPVPLVKCDENSPYRTITGDCNNRRSPALGAANRALARWLPAEYEDGLAVPFGWTQRKTRNGFRVPLAREVSNKIVGYLDEEGVLDQNRSLLFMQWGQIVDHDLDFAPETELGSSEHSKVQCEEYCIQGDNCFPIMFPKNDPKLKTQGKCMPFFRAGFVCPTPPYQSLARDQINAVTSFLDASLVYGSEPSLASRLRNLSSPLGLMAVNQEAWDHGLAYPPFNNVKPSPCEFINTTAHVPCFQAGDSRASEQILLATVHTLLLREHNRLARELKRLNPHWDGEMLYQEARKILGAFIQIITFRDYLPIVLGSEMQKWIPPYQGYNNSVDPRISNVFTFAFRFGHMEVPSTVSRLDENYQPWGPEAELPLHTLFFNTWRIIKDGGIDPLVRGLLAKKSKLMNQNKMVTSELRNKLFQPTHKIHGFDLAAINLQRCRDHGMPGYNSWRGFCGLSQPKTLKGLQAVLKNKILAKKLLDLYKTPDNIDIWIGGNAEPMVERGRVGPLLACLLGRQFQQIRDGDRFWWENPGVFTEKQRDSLQKVSFSRLICDNTHVTKVPLHAFQANNYPHDFVDCSAVDKLDLSPWASREN.

An N-terminal signal peptide occupies residues 1-21 (MLVCLHLQVFLASVALFEVAA). The propeptide occupies 22–117 (SDTIAQAAST…TDPSLDLTAL (96 aa)). N-linked (GlcNAc...) (complex) asparagine; alternate glycosylation is present at Asn106. A glycan (N-linked (GlcNAc...) (hybrid) asparagine; alternate) is linked at Asn106. Disulfide bonds link Cys123-Cys284, Cys132-Cys145, Cys246-Cys256, and Cys250-Cys274. Asn212 is a glycosylation site (N-linked (GlcNAc...) (complex) asparagine; alternate). Asn212 carries N-linked (GlcNAc...) (hybrid) asparagine; alternate glycosylation. Asp225 is a heme b binding site. The Proton acceptor role is filled by His226. Residue Asp227 coordinates Ca(2+). Ca(2+) is bound by residues Thr301, Phe303, Asp305, and Ser307. The residue at position 315 (Ser315) is a Phosphoserine. Asn322 is a glycosylation site (N-linked (GlcNAc...) (high mannose) asparagine). Cys354 and Cys365 are joined by a disulfide. N-linked (GlcNAc...) asparagine glycosylation occurs at Asn358. Glu375 provides a ligand contact to heme b. The N-linked (GlcNAc...) (complex) asparagine; alternate glycan is linked to Asn449. N-linked (GlcNAc...) (hybrid) asparagine; alternate glycosylation occurs at Asn449. Residue Asn449 is glycosylated (N-linked (GlcNAc...) (high mannose) asparagine; alternate). His468 lines the heme b pocket. Tyr482 bears the 3'-nitrotyrosine mark. 2 cysteine pairs are disulfide-bonded: Cys573/Cys630 and Cys671/Cys696.

Belongs to the peroxidase family. XPO subfamily. Ca(2+) serves as cofactor. Requires heme b as cofactor. As to expression, mammary gland; milk.

It localises to the secreted. It is found in the cytoplasm. It carries out the reaction 2 a phenolic donor + H2O2 = 2 a phenolic radical donor + 2 H2O. The catalysed reaction is thiocyanate + H2O2 + H(+) = hypothiocyanous acid + H2O. It catalyses the reaction iodide + H2O2 = hypoiodite + H2O. Its activity is regulated as follows. Inhibited by small molecule methimazole (MMZ). Heme-containing oxidoreductase which catalyzes the conversion of thiocyanate (SCN(-)) into antimicrobial agent hypothiocyanous acid (OSCN(-)) in the presence of hydrogen peroxide (H2O2). Also involved in the conversion of iodide (I(-)) into hypoiodite (IO(-)) in the presence of H2O2. Responsible for the inactivation of a wide range of micro-organisms and hence, important component of defense mechanism. Shows antibacterial properties against several Gram-positive bacteria including some Staphylococcus species and Gram-negative bacteria including E.coli, P.aeruginosa and some Salmonella species. Inhibits the growth of several fungi including A.niger, Trichoderma species, C.cassicola, P.meadii and C.salmonicolor. Does not have anti-fungal activity towards C.albicans and Pythium species. May protect the udder from infection and may promote growth in newborns. May be implicated in airway host defense against infection. May contribute to maintaining an appropriate H2O2 cellular level, therefore protecting cells from H2O2-caused injuries and inflammation. This chain is Lactoperoxidase (LPO), found in Capra hircus (Goat).